A 160-amino-acid polypeptide reads, in one-letter code: Transcription elongation factor GreA (160 aa).

Positions 49 to 77 (SEYQSAKDEQAFVEGRIQTLKNMIDNAEI) form a coiled coil.

It belongs to the GreA/GreB family.

In terms of biological role, necessary for efficient RNA polymerase transcription elongation past template-encoded arresting sites. The arresting sites in DNA have the property of trapping a certain fraction of elongating RNA polymerases that pass through, resulting in locked ternary complexes. Cleavage of the nascent transcript by cleavage factors such as GreA or GreB allows the resumption of elongation from the new 3'terminus. GreA releases sequences of 2 to 3 nucleotides. This Leuconostoc mesenteroides subsp. mesenteroides (strain ATCC 8293 / DSM 20343 / BCRC 11652 / CCM 1803 / JCM 6124 / NCDO 523 / NBRC 100496 / NCIMB 8023 / NCTC 12954 / NRRL B-1118 / 37Y) protein is Transcription elongation factor GreA.